Reading from the N-terminus, the 128-residue chain is NADH-quinone oxidoreductase subunit A (128 aa).

The next 3 membrane-spanning stretches (helical) occupy residues Phe12–Leu32, Phe66–Trp86, and Leu96–Val116.

Belongs to the complex I subunit 3 family. NDH-1 is composed of 14 different subunits. Subunits NuoA, H, J, K, L, M, N constitute the membrane sector of the complex.

It localises to the cell membrane. It catalyses the reaction a quinone + NADH + 5 H(+)(in) = a quinol + NAD(+) + 4 H(+)(out). NDH-1 shuttles electrons from NADH, via FMN and iron-sulfur (Fe-S) centers, to quinones in the respiratory chain. The immediate electron acceptor for the enzyme in this species is believed to be ubiquinone. Couples the redox reaction to proton translocation (for every two electrons transferred, four hydrogen ions are translocated across the cytoplasmic membrane), and thus conserves the redox energy in a proton gradient. The polypeptide is NADH-quinone oxidoreductase subunit A (Baumannia cicadellinicola subsp. Homalodisca coagulata).